A 76-amino-acid polypeptide reads, in one-letter code: Putative defensin-like protein 121 (76 aa).

Residues 1 to 26 (MTYKATILAIFMIILVLGIGTKETRG) form the signal peptide. 4 disulfide bridges follow: cysteine 30-cysteine 74, cysteine 39-cysteine 59, cysteine 44-cysteine 68, and cysteine 48-cysteine 70.

This sequence belongs to the DEFL family.

The protein resides in the secreted. This chain is Putative defensin-like protein 121 (LCR55), found in Arabidopsis thaliana (Mouse-ear cress).